The following is a 757-amino-acid chain: uncharacterized protein (757 aa).

In terms of domain architecture, S1 motif spans 640 to 709 (GMILEGVVSN…ARKRIALTMR (70 aa)). The segment covering 711–741 (DDEPGGAKHKMPSENRSRERTAGRKPQRNDR) has biased composition (basic and acidic residues). The interval 711-757 (DDEPGGAKHKMPSENRSRERTAGRKPQRNDRAPANSAMADAFAKLKR) is disordered.

This is an uncharacterized protein from Neisseria meningitidis serogroup B (strain ATCC BAA-335 / MC58).